Here is a 179-residue protein sequence, read N- to C-terminus: Iron sulfur cluster assembly protein 1, mitochondrial (179 aa).

Positions 160–179 are disordered; that stretch reads RSVKQPTLGPEAAQAETIAT.

The protein belongs to the NifU family. In terms of assembly, component of the core Fe-S cluster (ISC) assembly machinery. [2Fe-2S] cluster is required as a cofactor.

It localises to the mitochondrion matrix. Its pathway is cofactor biosynthesis; iron-sulfur cluster biosynthesis. Its function is as follows. Scaffold protein for the de novo synthesis of iron-sulfur (Fe-S) clusters within mitochondria, which is required for maturation of both mitochondrial and cytoplasmic [2Fe-2S] and [4Fe-4S] proteins. First, a [2Fe-2S] cluster is transiently assembled on the scaffold protein ISU1. In a second step, the cluster is released from ISU1, transferred to a glutaredoxin, followed by the formation of mitochondrial [2Fe-2S] proteins, the synthesis of [4Fe-4S] clusters and their target-specific insertion into the recipient apoproteins. Cluster assembly on ISU1 depends on the function of the cysteine desulfurase complex NFS1-ISD11, which serves as the sulfur donor for cluster synthesis, the iron-binding protein frataxin as the putative iron donor, and the electron transfer chain comprised of ferredoxin reductase and ferredoxin, which receive their electrons from NADH. In Debaryomyces hansenii (strain ATCC 36239 / CBS 767 / BCRC 21394 / JCM 1990 / NBRC 0083 / IGC 2968) (Yeast), this protein is Iron sulfur cluster assembly protein 1, mitochondrial (ISU1).